A 304-amino-acid chain; its full sequence is tRNA dimethylallyltransferase (304 aa).

Residue 10 to 17 coordinates ATP; that stretch reads GPTASGKT. 12–17 serves as a coordination point for substrate; that stretch reads TASGKT. Interaction with substrate tRNA stretches follow at residues 35 to 38, 159 to 163, and 240 to 245; these read DSAL, QRLSR, and RCVGYR.

It belongs to the IPP transferase family. In terms of assembly, monomer. Mg(2+) serves as cofactor.

The enzyme catalyses adenosine(37) in tRNA + dimethylallyl diphosphate = N(6)-dimethylallyladenosine(37) in tRNA + diphosphate. Catalyzes the transfer of a dimethylallyl group onto the adenine at position 37 in tRNAs that read codons beginning with uridine, leading to the formation of N6-(dimethylallyl)adenosine (i(6)A). The chain is tRNA dimethylallyltransferase from Shewanella putrefaciens (strain CN-32 / ATCC BAA-453).